We begin with the raw amino-acid sequence, 610 residues long: Ectonucleoside triphosphate diphosphohydrolase 7 (610 aa).

The Cytoplasmic segment spans residues 1 to 28 (MARISFSCLFPASWHCSLPSVTQFSRQR). A helical transmembrane segment spans residues 29–49 (VALLIISVAVFILVFAAVADL). Topologically, residues 50–555 (QLWSSRAFRD…VSWFRISFVY (506 aa)) are vesicular. The active-site Proton acceptor is the glutamate 217. N-linked (GlcNAc...) asparagine glycans are attached at residues asparagine 336 and asparagine 400. The cysteines at positions 454 and 483 are disulfide-linked. Residues 556–576 (NHYLFFACILVVLLSIVLYIL) form a helical membrane-spanning segment. The Cytoplasmic portion of the chain corresponds to 577–610 (RLRRIHRRQARASALDLLLMEEGVHTVLEPGIPT).

This sequence belongs to the GDA1/CD39 NTPase family. It depends on Ca(2+) as a cofactor. Requires Mg(2+) as cofactor.

It is found in the cytoplasmic vesicle membrane. The catalysed reaction is a ribonucleoside 5'-triphosphate + H2O = a ribonucleoside 5'-diphosphate + phosphate + H(+). The enzyme catalyses UTP + H2O = UDP + phosphate + H(+). It catalyses the reaction GTP + H2O = GDP + phosphate + H(+). It carries out the reaction CTP + H2O = CDP + phosphate + H(+). Catalyzes the hydrolysis of nucleoside triphosphates and diphosphates in a calcium- or magnesium-dependent manner. Preferentially hydrolyzes nucleoside 5'-triphosphates, with substrate preference for UTP &gt; GTP &gt; CTP. Hydrolyzes ATP and nucleoside diphosphates only to a minor extent. This chain is Ectonucleoside triphosphate diphosphohydrolase 7 (entpd7), found in Xenopus tropicalis (Western clawed frog).